The primary structure comprises 231 residues: NADH-ubiquinone oxidoreductase chain 4 (231 aa).

7 helical membrane-spanning segments follow: residues 1–21 (PIAG…YGMI), 34–54 (MFIP…LTCL), 62–82 (LIAY…SIQT), 86–106 (LSGA…LFCL), 118–138 (ILIL…WWLL), 169–189 (TIIL…HIFL), and 211–231 (LLMT…ELVM).

This sequence belongs to the complex I subunit 4 family.

Its subcellular location is the mitochondrion membrane. It catalyses the reaction a ubiquinone + NADH + 5 H(+)(in) = a ubiquinol + NAD(+) + 4 H(+)(out). Its function is as follows. Core subunit of the mitochondrial membrane respiratory chain NADH dehydrogenase (Complex I) that is believed to belong to the minimal assembly required for catalysis. Complex I functions in the transfer of electrons from NADH to the respiratory chain. The immediate electron acceptor for the enzyme is believed to be ubiquinone. The chain is NADH-ubiquinone oxidoreductase chain 4 (MT-ND4) from Causus rhombeatus (Rhombic night adder).